Consider the following 65-residue polypeptide: Large ribosomal subunit protein bL32 (65 aa).

Residues 1-19 show a composition bias toward basic residues; sequence MAVQKSRKTPSKRGMRRSH. Positions 1 to 32 are disordered; that stretch reads MAVQKSRKTPSKRGMRRSHNALTNPTLSEDQE.

This sequence belongs to the bacterial ribosomal protein bL32 family.

The chain is Large ribosomal subunit protein bL32 from Ruthia magnifica subsp. Calyptogena magnifica.